We begin with the raw amino-acid sequence, 168 residues long: uncharacterized protein (168 aa).

The 162-residue stretch at 7 to 168 folds into the N-acetyltransferase domain; it reads ERIDTLKTGD…TAKGWPDISM (162 aa).

This is an uncharacterized protein from Azospirillum brasilense.